The primary structure comprises 703 residues: Protein teflon (703 aa).

Residues 32-55 (MFCHFCKDIFTHLPEFMRHLQWSH) form a C2H2-type 1 zinc finger. 3 disordered regions span residues 78-111 (TSED…PGSS), 138-161 (SHEQ…ARKP), and 339-434 (SQQP…SKLE). Polar residues-rich tracts occupy residues 84–94 (QSQANSCSSGD) and 138–147 (SHEQSYSKTP). A compositionally biased stretch (basic and acidic residues) spans 148–161 (PDSRTEGFRCARKP). Composition is skewed to polar residues over residues 339–352 (SQQP…NNAV) and 364–373 (SLTVISSSPI). 2 consecutive C2H2-type zinc fingers follow at residues 649-672 (YFCE…QSVH) and 677-700 (FTCS…KTVH).

Belongs to the Teflon family.

It is found in the nucleus. The protein localises to the chromosome. Its function is as follows. Specifically required in males for proper segregation of autosomal bivalents at meiosis I. Expression is required in the male germ line prior to spermatocyte stage S4. May have a role as a bridging molecule maintaining adhesion to hold autosome bivalents together via heterochromatic connections. The polypeptide is Protein teflon (Drosophila pseudoobscura pseudoobscura (Fruit fly)).